Here is a 394-residue protein sequence, read N- to C-terminus: Suppressor APC domain-containing protein 2 (394 aa).

Disordered stretches follow at residues 1-23, 95-125, and 150-188; these read MAGA…STEG, LLSA…RLVF, and GPSA…SSSA. Residues 177–188 show a composition bias toward polar residues; that stretch reads SQSAALEPSSSA. A Phosphothreonine modification is found at threonine 219. Residues 227 to 277 adopt a coiled-coil conformation; that stretch reads GLLKQMKELEQEKEVLLQGLEMMARGRDWYQQQLQRVQERQRRLGQSRASA. Serine 284 bears the Phosphoserine mark. Positions 336–384 form a coiled coil; it reads QQQTILMLKEQNRLLTQEVTEKSERITQLEQEKSALIKQLFEARALSQQ.

In terms of assembly, interacts with a spindle orientation complex at least composed of GNAI1, GPSM2 and NUMA1. Interacts with GPSM2 (via TPR motifs); this interaction is required to prevent GPSM2 anchoring at the mitotic apical cortex and is inhibited in presence of NUMA1 in a dose dependent manner. Interacts with PARD3. As to expression, expressed in 5-month-old fetal tissues, including stomach, intestine, colon, liver, brain, lung, heart, spleen and kidney. Undetectable in non-cancerous adult tissues. Expressed in many primary gastric carcinoma, but almost not in adjacent normal mucosa. Expressed preferentially in M and G1 phases, compared to S and G2 phases. Expression is up-regulated in hepatocellular carcinoma (HCC) and colorectal cancer (CRC) tissues (at protein level).

The protein localises to the cytoplasm. The protein resides in the nucleus. It localises to the cell cortex. Its subcellular location is the apical cell membrane. It is found in the cell junction. The protein localises to the tight junction. Plays a role in planar mitotic spindle orientation in retinal progenitor cells (RPCs) and promotes the production of symmetric terminal divisions. Negatively regulates the mitotic apical cortex localization of GPSM2. Involved also in positive regulation of cell proliferation and tumor cell growth. This chain is Suppressor APC domain-containing protein 2, found in Homo sapiens (Human).